The sequence spans 555 residues: Glucose-6-phosphate isomerase (555 aa).

E356 (proton donor) is an active-site residue. Residues H387 and K515 contribute to the active site.

It belongs to the GPI family.

The protein localises to the cytoplasm. The enzyme catalyses alpha-D-glucose 6-phosphate = beta-D-fructose 6-phosphate. It participates in carbohydrate biosynthesis; gluconeogenesis. Its pathway is carbohydrate degradation; glycolysis; D-glyceraldehyde 3-phosphate and glycerone phosphate from D-glucose: step 2/4. Catalyzes the reversible isomerization of glucose-6-phosphate to fructose-6-phosphate. The polypeptide is Glucose-6-phosphate isomerase (Desulforapulum autotrophicum (strain ATCC 43914 / DSM 3382 / VKM B-1955 / HRM2) (Desulfobacterium autotrophicum)).